Here is a 527-residue protein sequence, read N- to C-terminus: MSLAEAISLWNEGVLAADKKDWKGALDAFTGVQDPHSRICFNVGCIYTILGNLPEAEKAFTKSINRDKHLAVSYFQRGMLYYQMEKYDSAIKDLKEALTQLRGNQLIDYKILGLQFKLFACEVLYNIAFMYAKREEWKKAEEHLALAVSMKSEPRHSKIDRAMESVWKQKLYEPVVIPVGRLFRPNEKQVAQLVKKDYLGKATVVASVVDQDSFSGFAPLQPQAAEPPPRPKTPEIFRALEGEAHRVLFGFVPETPEELQVMPGNIVFVLKKGNDNWATVMFNGQKGLVPCNYLEPVELRIHPQQQPQEETSLESDIPAPPSSSAPGRPQLSPGQKGKEEPKQEIKLSVPKSYTLKVHYKYTVVMETQFRLPYSQVRDMVAKKLDLLPEHTKLSYRRQDSNELVPLSEFSMKDAWAQVKNYCLTLWCENTVGDQGFPDEPEESKKSDANNQTTEPELKEGSKVVALFSYEATQPEDLEFLEGDVILVISTVNEQWLEGECKGKVGIFPKAFVEQHPTTDLESTPGRV.

TPR repeat units follow at residues Ser-37–Leu-70, Ala-71–Asn-104, and Cys-121–Pro-154. Position 233 is a phosphothreonine (Thr-233). One can recognise an SH3 1 domain in the interval Leu-240–Leu-299. Residues Gln-304 to Ile-345 are disordered. Ser-324 bears the Phosphoserine mark. The span at Lys-336–Ile-345 shows a compositional bias: basic and acidic residues. The PB1 domain occupies Ser-352 to Thr-430. Phosphoserine is present on Ser-400. The disordered stretch occupies residues Gln-434–Leu-457. The region spanning Lys-458–Thr-517 is the SH3 2 domain.

The protein belongs to the NCF2/NOXA1 family. In terms of assembly, component of the phagocyte NADPH oxidase complex composed of an obligatory core heterodimer formed by the membrane proteins CYBA and CYBB and the cytosolic regulatory subunits NCF1/p47-phox, NCF2/p67-phox, NCF4/p40-phox and the small GTPase RAC1 or RAC2. Part of a cytosolic complex composed at least by NCF1, NCF2 and NCF4. Interacts with NCF4. Interacts (via the C-terminal SH3 domain) with NCF1 (via C-terminus). Interacts with SYTL1 and RAC1. May interact with NOXO1. Interacts with S100A8 and calprotectin (S100A8/9). Interacts with GBP7 (via GB1/RHD3-type G domain). Interacts with CYBB; the interaction is enhanced in the presence of GBP7.

The protein localises to the cytoplasm. Functionally, subunit of the phagocyte NADPH oxidase complex that mediates the transfer of electrons from cytosolic NADPH to O2 to produce the superoxide anion (O2(-)). In the activated complex, electrons are first transferred from NADPH to flavin adenine dinucleotide (FAD) and subsequently transferred via two heme molecules to molecular oxygen, producing superoxide through an outer-sphere reaction. Activation of the NADPH oxidase complex is initiated by the assembly of cytosolic subunits of the NADPH oxidase complex with the core NADPH oxidase complex to form a complex at the plasma membrane or phagosomal membrane. This activation process is initiated by phosphorylation dependent binding of the cytosolic NCF1/p47-phox subunit to the C-terminus of CYBA/p22-phox. In Bos taurus (Bovine), this protein is Neutrophil cytosol factor 2.